The sequence spans 370 residues: Polygalacturonase 1 (370 aa).

Residues Met-1–Ala-18 form the signal peptide. Cys-36 and Cys-51 are disulfide-bonded. PbH1 repeat units lie at residues Ala-163–Glu-194, Ser-195–Ser-216, Gly-217–Ser-237, Val-246–Thr-267, and Val-275–Gln-297. The active-site Proton donor is Asp-209. The cysteines at positions 211 and 227 are disulfide-linked. His-231 is a catalytic residue. Asn-248 carries an N-linked (GlcNAc...) asparagine glycan. Cystine bridges form between Cys-337–Cys-342 and Cys-361–Cys-370.

This sequence belongs to the glycosyl hydrolase 28 family.

The protein localises to the secreted. The enzyme catalyses (1,4-alpha-D-galacturonosyl)n+m + H2O = (1,4-alpha-D-galacturonosyl)n + (1,4-alpha-D-galacturonosyl)m.. This Penicillium olsonii protein is Polygalacturonase 1 (PG1).